Here is a 327-residue protein sequence, read N- to C-terminus: QQQPFATIAQEGKAPYIASMALRKLYMDRAVDEEELRAFTEMMVALDDEFEFDSYEVHHQANDTIDAVGDNKKDAKPEQGSIQSNPNKGKEKDVNAGTSGTHTVPRIKAITPKMRMPKSKGATVLNLEHLLEYAPQQIDISNTRATQSQFDTWYEAVRMAYDIGETEMPTVMNGLMVWCIENGTSPNVNGVWVMMDGNEQVGYPLKPIVENAKPTLRQIMAHFSDVAEAYIEMRNKKEPYMPRYGLIRNLRDVGLARYAFDFYEVTSRTPVRAREAHIQMKAAALKSAQPRLFGLDGGISTQEENTERHTTEDVSPSMHTLLGVKNM.

The segment at Ile65–His102 is disordered.

The protein belongs to the potyviridae genome polyprotein family. Genome polyprotein of potyviruses undergoes post-translational proteolytic processing by the main proteinase NIa-pro resulting in the production of at least ten individual proteins. The P1 proteinase and the HC-pro cleave only their respective C-termini autocatalytically. 6K1 is essential for proper proteolytic separation of P3 from CI.

The protein resides in the virion. It carries out the reaction RNA(n) + a ribonucleoside 5'-triphosphate = RNA(n+1) + diphosphate. Its function is as follows. An RNA-dependent RNA polymerase that plays an essential role in the virus replication. Functionally, involved in aphid transmission, cell-to-cell and systemis movement, encapsidation of the viral RNA and in the regulation of viral RNA amplification. This is Genome polyprotein from Potato virus Y (strain Chinese) (PVY).